Reading from the N-terminus, the 418-residue chain is Light-independent protochlorophyllide reductase subunit N (418 aa).

[4Fe-4S] cluster contacts are provided by C17, C42, and C103.

Belongs to the BchN/ChlN family. In terms of assembly, protochlorophyllide reductase is composed of three subunits; ChlL, ChlN and ChlB. Forms a heterotetramer of two ChlB and two ChlN subunits. [4Fe-4S] cluster is required as a cofactor.

It catalyses the reaction chlorophyllide a + oxidized 2[4Fe-4S]-[ferredoxin] + 2 ADP + 2 phosphate = protochlorophyllide a + reduced 2[4Fe-4S]-[ferredoxin] + 2 ATP + 2 H2O. It functions in the pathway porphyrin-containing compound metabolism; chlorophyll biosynthesis (light-independent). In terms of biological role, component of the dark-operative protochlorophyllide reductase (DPOR) that uses Mg-ATP and reduced ferredoxin to reduce ring D of protochlorophyllide (Pchlide) to form chlorophyllide a (Chlide). This reaction is light-independent. The NB-protein (ChlN-ChlB) is the catalytic component of the complex. The chain is Light-independent protochlorophyllide reductase subunit N from Prochlorococcus marinus (strain NATL2A).